The following is a 468-amino-acid chain: Aldehyde dehydrogenase family 3 member B1 (468 aa).

Met1 carries the post-translational modification N-acetylmethionine. Gly188–Gly193 provides a ligand contact to NAD(+). Residues Glu210 and Cys244 contribute to the active site. S-palmitoyl cysteine attachment occurs at residues Cys462 and Cys463. Residue Cys465 is modified to Cysteine methyl ester. The S-geranylgeranyl cysteine moiety is linked to residue Cys465. A propeptide spans Thr466–Leu468 (removed in mature form).

The protein belongs to the aldehyde dehydrogenase family. Dually lipidated in the C-terminus; prenylation occurs prior to, and is a prerequisite for palmitoylation. It is also required for activity towards long-chain substrates.

Its subcellular location is the cell membrane. It catalyses the reaction an aldehyde + NAD(+) + H2O = a carboxylate + NADH + 2 H(+). It carries out the reaction a long-chain fatty aldehyde + NAD(+) + H2O = a long-chain fatty acid + NADH + 2 H(+). The catalysed reaction is a medium-chain fatty aldehyde + NAD(+) + H2O = a medium-chain fatty acid + NADH + 2 H(+). The enzyme catalyses octanal + NAD(+) + H2O = octanoate + NADH + 2 H(+). It catalyses the reaction nonanal + NAD(+) + H2O = nonanoate + NADH + 2 H(+). It carries out the reaction hexadecanoate + NADH + 2 H(+) = hexadecanal + NAD(+) + H2O. The catalysed reaction is (2E)-octenal + NAD(+) + H2O = (2E)-octenoate + NADH + 2 H(+). The enzyme catalyses (E)-non-2-enal + NAD(+) + H2O = (E)-non-2-enoate + NADH + 2 H(+). It catalyses the reaction (E)-4-hydroxynon-2-enal + NAD(+) + H2O = (E)-4-hydroxynon-2-enoate + NADH + 2 H(+). It carries out the reaction (2E)-hexadecenal + NAD(+) + H2O = (E)-hexadec-2-enoate + NADH + 2 H(+). The catalysed reaction is benzaldehyde + NAD(+) + H2O = benzoate + NADH + 2 H(+). The enzyme catalyses an aldehyde + NADP(+) + H2O = a carboxylate + NADPH + 2 H(+). It catalyses the reaction a medium-chain fatty aldehyde + NADP(+) + H2O = a medium-chain fatty acid + NADPH + 2 H(+). It carries out the reaction hexanal + NADP(+) + H2O = hexanoate + NADPH + 2 H(+). The catalysed reaction is octanal + NADP(+) + H2O = octanoate + NADPH + 2 H(+). The enzyme catalyses nonanal + NADP(+) + H2O = nonanoate + NADPH + 2 H(+). It catalyses the reaction (2E)-octenal + NADP(+) + H2O = (2E)-octenoate + NADPH + 2 H(+). It carries out the reaction (E)-non-2-enal + NADP(+) + H2O = (E)-non-2-enoate + NADPH + 2 H(+). The catalysed reaction is (E)-4-hydroxynon-2-enal + NADP(+) + H2O = (E)-4-hydroxynon-2-enoate + NADPH + 2 H(+). The enzyme catalyses benzaldehyde + NADP(+) + H2O = benzoate + NADPH + 2 H(+). It participates in alcohol metabolism; ethanol degradation; acetate from ethanol: step 2/2. Oxidizes medium and long chain saturated and unsaturated fatty aldehydes generated in the plasma membrane into non-toxic fatty acids. May have a protective role against the cytotoxicity induced by lipid peroxidation. Short-chain fatty aldehydes are not good substrates. Can use both NADP(+) and NAD(+) as electron acceptor in vitro, however in vivo preference will depend on their tissue levels. Low activity towards acetaldehyde and 3,4-dihydroxyphenylacetaldehyde. Able to metabolize aromatic aldehydes such as benzaldehyde to their acid form. The protein is Aldehyde dehydrogenase family 3 member B1 (Aldh3b1) of Rattus norvegicus (Rat).